Reading from the N-terminus, the 1046-residue chain is Multidrug resistance protein MexB (1046 aa).

Topologically, residues 1–9 (MSKFFIDRP) are cytoplasmic. The helical transmembrane segment at 10 to 28 (IFAWVIALVIMLAGGLSIL) threads the bilayer. Over 29-339 (SLPVNQYPAI…TPVVSASIHE (311 aa)) the chain is Periplasmic. A helical transmembrane segment spans residues 340 to 359 (VVKTLGEAILLVFLVMYLFL). Over 360-365 (QNFRAT) the chain is Cytoplasmic. A helical transmembrane segment spans residues 366 to 385 (LIPTIAVPVVLLGTFGVLAA). Over 386 to 391 (FGFSIN) the chain is Periplasmic. A helical membrane pass occupies residues 392-413 (TLTMFGMVLAIGLLVDDAIVVV). Residues 414-441 (ENVERVMAEEGLSPREAARKSMGQIQGA) are Cytoplasmic-facing. Residues 442–460 (LVGIAMVLSAVFLPMAFFG) form a helical membrane-spanning segment. Over 461–473 (GSTGVIYRQFSIT) the chain is Periplasmic. A helical membrane pass occupies residues 474–496 (IVSAMALSVIVALILTPALCATM). Residues 497 to 538 (LKPIEKGDHGEHKGGFFGWFNRMFLSTTHGYERGVASILKHR) are Cytoplasmic-facing. The chain crosses the membrane as a helical span at residues 539–557 (APYLLIYVVIVAGMIWMFT). Residues 558 to 871 (RIPTAFLPDE…SYEERLSGSQ (314 aa)) are Periplasmic-facing. Residues 872–891 (APALYALSLLVVFLCLAALY) form a helical membrane-spanning segment. Residues 892–897 (ESWSIP) are Cytoplasmic-facing. The helical transmembrane segment at 898 to 917 (FSVMLVVPLGVIGALLATSM) threads the bilayer. At 918–923 (RGLSND) the chain is on the periplasmic side. Residues 924–945 (VFFQVGLLTTIGLSAKNAILIV) traverse the membrane as a helical segment. Topologically, residues 946 to 972 (EFAKELHEQGKGIVEAAIEACRMRLRP) are cytoplasmic. Residues 973–991 (IVMTSLAFILGVVPLAIST) form a helical membrane-spanning segment. The Periplasmic segment spans residues 992–1004 (GAGSGSQHAIGTG). The helical transmembrane segment at 1005–1027 (VIGGMVTATVLAIFWVPLFYVAV) threads the bilayer. Residues 1028–1046 (STLFKDEASKQQASVEKGQ) lie on the Cytoplasmic side of the membrane.

It belongs to the resistance-nodulation-cell division (RND) (TC 2.A.6) family. Component of the MexAB-OprM multidrug efflux complex, composed of six MexA subunits forming a hexameric tube, binding to a MexB trimer, which interact with the trimeric OprM outer membrane channel protein. OprM is thought to not directly contact MexB; instead, MexA joins MexB and OprM by forming a funnel-like hexamer anchored to the inner membrane. MexA may initially form a hexameric ring complex with MexB prior to OprM, then OprM undergoes a conformational change as it contacts MexA, allowing the periplasmic gate to open. It is thought that, under high intracellular substrate concentration, MexB ejects substrate into the tunnel formed by MexA-OprM; as the substrate level declines, conformational changes in MexB cause efflux to reduce and stop and the complex shifts to the closed state. Acts as a substrate:proton antiporter and activity is enhanced significantly when in complex with MexA and OprM, in vitro.

It is found in the cell inner membrane. Export of antibiotics and solvents is dramatically decreased in the presence of the protonophore carbonyl cyanide m-chlorophenylhydrazone (CCCP), therefore may be driven by a proton gradient. Antibiotic efflux is inhibited by pyridopyrimidine derivatives, such as ABI-PP, acting by binding to a hydrophobic pocket in MexB. Its function is as follows. The inner membrane transporter component of the MexAB-OprM efflux system that confers multidrug resistance. Functions as the major efflux pump for n-hexane and p-xylene efflux. Has been shown in one study to be involved in the active efflux of the autoinducer N-(3-oxododecanoyl) homoserine lactone, thereby playing an indirect role in quorum-sensing; but has been shown in another study not to be involved in efflux of this autoinducer. Over-expression of the pump increases antibiotic and solvent efflux capacities. Implicated in the secretion of the siderophore pyoverdine. This Pseudomonas aeruginosa (strain ATCC 15692 / DSM 22644 / CIP 104116 / JCM 14847 / LMG 12228 / 1C / PRS 101 / PAO1) protein is Multidrug resistance protein MexB (mexB).